A 266-amino-acid polypeptide reads, in one-letter code: Bax inhibitor 1 (266 aa).

Residues 1 to 22 (MPANYQSVPQDDPSVPNLAQAP) are disordered. A run of 7 helical transmembrane segments spans residues 70–90 (LFVTSLFGGIFYLHPAFSFWV), 92–112 (MHPWFLILNFFISLVVLFGLI), 123–143 (IFLFLFTALEGLTLGTAITFF), 147–167 (IILEAVFITLGVFVALTAFTF), 177–197 (GGFLYVSLWSLILTPLIFFFV), 201–221 (PFIDMAFAGFGTLVFCGYILF), and 240–260 (LMLYLDFINLFIRILQILGML).

It belongs to the BI1 family. LFG subfamily.

It is found in the endoplasmic reticulum membrane. The protein resides in the mitochondrion membrane. Its subcellular location is the golgi apparatus membrane. The protein localises to the vacuole membrane. In terms of biological role, links the unfolded protein response and programmed cell death and mediates mitochondrial-dependent apoptosis. Induces cell death and disruption of the mitochondrial transmembrane potential. The chain is Bax inhibitor 1 (bxi1) from Schizosaccharomyces pombe (strain 972 / ATCC 24843) (Fission yeast).